The primary structure comprises 91 residues: MARVTVQDAVEKIGNRFDLVLVAARRARQIQSGGKDALVPEENDKVTVIALREIEEGLITNQILDVRERQEQQEQQAAEIQAVTAIAEGRR.

The protein belongs to the RNA polymerase subunit omega family. As to quaternary structure, the RNAP catalytic core consists of 2 alpha, 1 beta, 1 beta' and 1 omega subunit. When a sigma factor is associated with the core the holoenzyme is formed, which can initiate transcription.

The enzyme catalyses RNA(n) + a ribonucleoside 5'-triphosphate = RNA(n+1) + diphosphate. Its function is as follows. Promotes RNA polymerase assembly. Latches the N- and C-terminal regions of the beta' subunit thereby facilitating its interaction with the beta and alpha subunits. The protein is DNA-directed RNA polymerase subunit omega of Yersinia pestis bv. Antiqua (strain Antiqua).